The chain runs to 227 residues: 2,3-bisphosphoglycerate-dependent phosphoglycerate mutase (227 aa).

Residues 7–14 (RHGQSEWN), 20–21 (TG), R59, 86–89 (ERHY), K97, 113–114 (RR), and 182–183 (GN) each bind substrate. H8 (tele-phosphohistidine intermediate) is an active-site residue. E86 acts as the Proton donor/acceptor in catalysis.

The protein belongs to the phosphoglycerate mutase family. BPG-dependent PGAM subfamily. In terms of assembly, homodimer.

It catalyses the reaction (2R)-2-phosphoglycerate = (2R)-3-phosphoglycerate. It functions in the pathway carbohydrate degradation; glycolysis; pyruvate from D-glyceraldehyde 3-phosphate: step 3/5. Catalyzes the interconversion of 2-phosphoglycerate and 3-phosphoglycerate. The polypeptide is 2,3-bisphosphoglycerate-dependent phosphoglycerate mutase (Neisseria gonorrhoeae (strain ATCC 700825 / FA 1090)).